The sequence spans 533 residues: D-3-phosphoglycerate dehydrogenase (533 aa).

Position 2 is an N-acetylalanine (Ala2). Residue Ser14 is modified to Phosphoserine. At Lys21 the chain carries N6-acetyllysine; alternate. Residue Lys21 forms a Glycyl lysine isopeptide (Lys-Gly) (interchain with G-Cter in SUMO1); alternate linkage. A Glycyl lysine isopeptide (Lys-Gly) (interchain with G-Cter in SUMO2); alternate cross-link involves residue Lys21. Lys58 carries the post-translational modification N6-acetyllysine. NAD(+) contacts are provided by residues Thr78, 155 to 156 (RI), Asp175, Thr207, 234 to 236 (CAR), and Asp260. Residue Thr78 is modified to Phosphothreonine. Residue Arg236 is part of the active site. Glu265 is an active-site residue. The active-site Proton donor is the His283. 283 to 286 (HLGA) is an NAD(+) binding site.

This sequence belongs to the D-isomer specific 2-hydroxyacid dehydrogenase family. In terms of assembly, homotetramer.

It catalyses the reaction (2R)-3-phosphoglycerate + NAD(+) = 3-phosphooxypyruvate + NADH + H(+). It carries out the reaction (R)-2-hydroxyglutarate + NAD(+) = 2-oxoglutarate + NADH + H(+). The enzyme catalyses (S)-malate + NAD(+) = oxaloacetate + NADH + H(+). It functions in the pathway amino-acid biosynthesis; L-serine biosynthesis; L-serine from 3-phospho-D-glycerate: step 1/3. In terms of biological role, catalyzes the reversible oxidation of 3-phospho-D-glycerate to 3-phosphonooxypyruvate, the first step of the phosphorylated L-serine biosynthesis pathway. Also catalyzes the reversible oxidation of 2-hydroxyglutarate to 2-oxoglutarate and the reversible oxidation of (S)-malate to oxaloacetate. This chain is D-3-phosphoglycerate dehydrogenase (PHGDH), found in Homo sapiens (Human).